Here is a 128-residue protein sequence, read N- to C-terminus: MWRIMMKSKLHRATVTAADLNYIGSITIDSDLMAAADILPNEKVQVVDNNNGARLETYAIPGPAGSGVICANGAAARLVQPGDIIIIIAYGIFDDREARTYQPRVIFLDARNKITAVKKGEQPGQVWV.

S25 (schiff-base intermediate with substrate; via pyruvic acid) is an active-site residue. A Pyruvic acid (Ser) modification is found at S25. T57 is a substrate binding site. Catalysis depends on Y58, which acts as the Proton donor. A substrate-binding site is contributed by 73–75 (GAA).

Belongs to the PanD family. As to quaternary structure, heterooctamer of four alpha and four beta subunits. The cofactor is pyruvate. In terms of processing, is synthesized initially as an inactive proenzyme, which is activated by self-cleavage at a specific serine bond to produce a beta-subunit with a hydroxyl group at its C-terminus and an alpha-subunit with a pyruvoyl group at its N-terminus.

The protein resides in the cytoplasm. The enzyme catalyses L-aspartate + H(+) = beta-alanine + CO2. It participates in cofactor biosynthesis; (R)-pantothenate biosynthesis; beta-alanine from L-aspartate: step 1/1. In terms of biological role, catalyzes the pyruvoyl-dependent decarboxylation of aspartate to produce beta-alanine. This is Aspartate 1-decarboxylase from Moorella thermoacetica (strain ATCC 39073 / JCM 9320).